A 127-amino-acid chain; its full sequence is NADPH-dependent 7-cyano-7-deazaguanine reductase (127 aa).

The active-site Thioimide intermediate is the cysteine 40. The active-site Proton donor is aspartate 47. Substrate is bound by residues 62-64 (VEL) and 81-82 (HE).

The protein belongs to the GTP cyclohydrolase I family. QueF type 1 subfamily.

It is found in the cytoplasm. It catalyses the reaction 7-aminomethyl-7-carbaguanine + 2 NADP(+) = 7-cyano-7-deazaguanine + 2 NADPH + 3 H(+). It functions in the pathway tRNA modification; tRNA-queuosine biosynthesis. In terms of biological role, catalyzes the NADPH-dependent reduction of 7-cyano-7-deazaguanine (preQ0) to 7-aminomethyl-7-deazaguanine (preQ1). The chain is NADPH-dependent 7-cyano-7-deazaguanine reductase from Campylobacter jejuni (strain RM1221).